A 335-amino-acid chain; its full sequence is Putative type I specificity subunit S.MpnORF89P (335 aa).

This sequence belongs to the type-I restriction system S methylase family. As to quaternary structure, the methyltransferase is composed of M and S polypeptides.

Its function is as follows. The specificity (S) subunit of a type I methyltransferase (MTase); this subunit dictates DNA sequence specificity. The single R subunit has multiple frameshifts and is probably not expressed. The sequence is that of Putative type I specificity subunit S.MpnORF89P from Mycoplasma pneumoniae (strain ATCC 29342 / M129 / Subtype 1) (Mycoplasmoides pneumoniae).